The chain runs to 556 residues: 2-succinyl-5-enolpyruvyl-6-hydroxy-3-cyclohexene-1-carboxylate synthase (556 aa).

The protein belongs to the TPP enzyme family. MenD subfamily. As to quaternary structure, homodimer. Requires Mg(2+) as cofactor. Mn(2+) serves as cofactor. It depends on thiamine diphosphate as a cofactor.

The catalysed reaction is isochorismate + 2-oxoglutarate + H(+) = 5-enolpyruvoyl-6-hydroxy-2-succinyl-cyclohex-3-ene-1-carboxylate + CO2. It participates in quinol/quinone metabolism; 1,4-dihydroxy-2-naphthoate biosynthesis; 1,4-dihydroxy-2-naphthoate from chorismate: step 2/7. Its pathway is quinol/quinone metabolism; menaquinone biosynthesis. Functionally, catalyzes the thiamine diphosphate-dependent decarboxylation of 2-oxoglutarate and the subsequent addition of the resulting succinic semialdehyde-thiamine pyrophosphate anion to isochorismate to yield 2-succinyl-5-enolpyruvyl-6-hydroxy-3-cyclohexene-1-carboxylate (SEPHCHC). The sequence is that of 2-succinyl-5-enolpyruvyl-6-hydroxy-3-cyclohexene-1-carboxylate synthase from Salmonella dublin (strain CT_02021853).